We begin with the raw amino-acid sequence, 320 residues long: ATP phosphoribosyltransferase (320 aa).

This sequence belongs to the ATP phosphoribosyltransferase family. Long subfamily. The cofactor is Mg(2+).

Its subcellular location is the cytoplasm. It carries out the reaction 1-(5-phospho-beta-D-ribosyl)-ATP + diphosphate = 5-phospho-alpha-D-ribose 1-diphosphate + ATP. The protein operates within amino-acid biosynthesis; L-histidine biosynthesis; L-histidine from 5-phospho-alpha-D-ribose 1-diphosphate: step 1/9. Its activity is regulated as follows. Feedback inhibited by histidine. In terms of biological role, catalyzes the condensation of ATP and 5-phosphoribose 1-diphosphate to form N'-(5'-phosphoribosyl)-ATP (PR-ATP). Has a crucial role in the pathway because the rate of histidine biosynthesis seems to be controlled primarily by regulation of HisG enzymatic activity. This chain is ATP phosphoribosyltransferase (hisG), found in Caulobacter vibrioides (strain ATCC 19089 / CIP 103742 / CB 15) (Caulobacter crescentus).